A 453-amino-acid polypeptide reads, in one-letter code: UDP-glycosyltransferase 74E2 (453 aa).

Catalysis depends on H17, which acts as the Proton acceptor. Residue H17 coordinates an anthocyanidin. D109 (charge relay) is an active-site residue. Positions 131, 334, 349, 352, 353, 354, 357, 373, and 374 each coordinate UDP-alpha-D-glucose.

The protein belongs to the UDP-glycosyltransferase family. In terms of tissue distribution, expressed in roots, cotyledons and leaf hydathodes.

It catalyses the reaction (indol-3-yl)butanoate + UDP-alpha-D-glucose = 4-(indol-3-yl)butanoyl-beta-D-glucose + UDP. Its function is as follows. Glucosyltransferase that acts on the auxin indole-3-butyric acid (IBA). Mediates abiotic stress responses and stress-induced morphological adaptations by regulating auxin homeostasis. Possesses low activity in vitro on jasmonate (JA) and the synthetic auxin analog naphthaleneacetic acid (NAA). The protein is UDP-glycosyltransferase 74E2 (UGT74E2) of Arabidopsis thaliana (Mouse-ear cress).